The following is a 167-amino-acid chain: Ubiquitin-fold modifier-conjugating enzyme 1 (167 aa).

The active-site Glycyl thioester intermediate is Cys116.

It belongs to the ubiquitin-conjugating enzyme family. UFC1 subfamily. In terms of assembly, interacts with UBA5 (via C-terminus). Interacts with UFL1. Interacts with UFM1.

In terms of biological role, E2-like enzyme which specifically catalyzes the second step in ufmylation. Accepts the ubiquitin-like modifier UFM1 from the E1 enzyme UBA5 and forms an intermediate with UFM1 via a thioester linkage. Ufmylation is involved in various processes, such as ribosome recycling, response to DNA damage, interferon response or reticulophagy (also called ER-phagy). The sequence is that of Ubiquitin-fold modifier-conjugating enzyme 1 from Osmerus mordax (Rainbow smelt).